Reading from the N-terminus, the 158-residue chain is uncharacterized protein (158 aa).

Polar residues predominate over residues 1 to 21 (MPHTGSQHTLQATPKTAQHTG). Disordered stretches follow at residues 1 to 89 (MPHT…RVEG) and 107 to 158 (EEEK…DAKT). Basic and acidic residues-rich tracts occupy residues 51-68 (HTEG…DKAG) and 107-127 (EEEK…RESR). Residues 128–137 (QGTAHKSTCM) show a composition bias toward polar residues. The span at 149–158 (EIGKVEDAKT) shows a compositional bias: basic and acidic residues.

This is an uncharacterized protein from Encephalitozoon cuniculi (strain GB-M1) (Microsporidian parasite).